A 159-amino-acid chain; its full sequence is Small ribosomal subunit protein uS9 (159 aa).

Belongs to the universal ribosomal protein uS9 family.

This is Small ribosomal subunit protein uS9 from Bradyrhizobium diazoefficiens (strain JCM 10833 / BCRC 13528 / IAM 13628 / NBRC 14792 / USDA 110).